A 161-amino-acid polypeptide reads, in one-letter code: Phosphopantetheine adenylyltransferase (161 aa).

Thr10 contacts substrate. ATP is bound by residues 10–11 (TF) and His18. Lys42, Met74, and Arg88 together coordinate substrate. ATP-binding positions include 89-91 (GVR), Glu99, and 124-130 (LSFVSSS).

It belongs to the bacterial CoaD family. As to quaternary structure, homohexamer. Mg(2+) serves as cofactor.

The protein localises to the cytoplasm. It carries out the reaction (R)-4'-phosphopantetheine + ATP + H(+) = 3'-dephospho-CoA + diphosphate. Its pathway is cofactor biosynthesis; coenzyme A biosynthesis; CoA from (R)-pantothenate: step 4/5. Its function is as follows. Reversibly transfers an adenylyl group from ATP to 4'-phosphopantetheine, yielding dephospho-CoA (dPCoA) and pyrophosphate. The polypeptide is Phosphopantetheine adenylyltransferase (Proteus mirabilis (strain HI4320)).